We begin with the raw amino-acid sequence, 298 residues long: Probable 3-hydroxyacyl-CoA dehydrogenase F54C8.1 (298 aa).

Belongs to the 3-hydroxyacyl-CoA dehydrogenase family. Homodimer.

It localises to the mitochondrion matrix. The enzyme catalyses a (3S)-3-hydroxyacyl-CoA + NAD(+) = a 3-oxoacyl-CoA + NADH + H(+). It functions in the pathway lipid metabolism; fatty acid beta-oxidation. The polypeptide is Probable 3-hydroxyacyl-CoA dehydrogenase F54C8.1 (Caenorhabditis elegans).